The sequence spans 310 residues: ADP-L-glycero-D-manno-heptose-6-epimerase (310 aa).

NADP(+) is bound by residues 10-11 (FI), 31-32 (DN), Lys38, Lys53, 75-79 (EGACS), and Asn92. The active-site Proton acceptor is Tyr140. Lys144 lines the NADP(+) pocket. Residue Asn169 coordinates substrate. NADP(+) is bound by residues Val170 and Lys178. Residue Lys178 is the Proton acceptor of the active site. Substrate contacts are provided by residues Ser180, His187, 201–204 (FEGS), and Arg209. Lys267 is modified (N6-acetyllysine). Tyr272 lines the substrate pocket.

This sequence belongs to the NAD(P)-dependent epimerase/dehydratase family. HldD subfamily. As to quaternary structure, homopentamer. Requires NADP(+) as cofactor.

It carries out the reaction ADP-D-glycero-beta-D-manno-heptose = ADP-L-glycero-beta-D-manno-heptose. It functions in the pathway nucleotide-sugar biosynthesis; ADP-L-glycero-beta-D-manno-heptose biosynthesis; ADP-L-glycero-beta-D-manno-heptose from D-glycero-beta-D-manno-heptose 7-phosphate: step 4/4. Catalyzes the interconversion between ADP-D-glycero-beta-D-manno-heptose and ADP-L-glycero-beta-D-manno-heptose via an epimerization at carbon 6 of the heptose. The protein is ADP-L-glycero-D-manno-heptose-6-epimerase of Shigella boydii serotype 18 (strain CDC 3083-94 / BS512).